Reading from the N-terminus, the 125-residue chain is Ribosome-binding factor A (125 aa).

This sequence belongs to the RbfA family. As to quaternary structure, monomer. Binds 30S ribosomal subunits, but not 50S ribosomal subunits or 70S ribosomes.

It localises to the cytoplasm. Its function is as follows. One of several proteins that assist in the late maturation steps of the functional core of the 30S ribosomal subunit. Associates with free 30S ribosomal subunits (but not with 30S subunits that are part of 70S ribosomes or polysomes). Required for efficient processing of 16S rRNA. May interact with the 5'-terminal helix region of 16S rRNA. In Paracidovorax citrulli (strain AAC00-1) (Acidovorax citrulli), this protein is Ribosome-binding factor A.